The chain runs to 279 residues: MTKADTIFKENIRRILKEGVFSENARPRYKDGNVANSKYITGSFAEYDLSKGEFPITTLRPIAIKSAIKEVLWIYQDQSNSLELLNDKYNVHYWNDWEVGDTGTIGQRYGAIVKKHDIINKILQQLAANPWNRRNIISLWDYEAFEETEGLLPCAFQTMFDVRRVDEDIYLDATLTQRSNDMLVAHHINAMQYVALQMMIAKHFGWKVGKFFYFINNLHIYDNQFEQAEELLRREPSDCQPRLVLNVPDGTNFFDIKAEDFELLDYDPVKPQLKFDLAI.

133-134 (RR) provides a ligand contact to dUMP. The active-site Nucleophile is the Cys154. Residues 178-181 (RSND), Asn189, and 219-221 (HIY) each bind dUMP. Asp181 serves as a coordination point for (6R)-5,10-methylene-5,6,7,8-tetrahydrofolate. Residue Ala278 participates in (6R)-5,10-methylene-5,6,7,8-tetrahydrofolate binding.

Belongs to the thymidylate synthase family. Bacterial-type ThyA subfamily. In terms of assembly, homodimer.

It is found in the cytoplasm. It carries out the reaction dUMP + (6R)-5,10-methylene-5,6,7,8-tetrahydrofolate = 7,8-dihydrofolate + dTMP. It participates in pyrimidine metabolism; dTTP biosynthesis. Functionally, catalyzes the reductive methylation of 2'-deoxyuridine-5'-monophosphate (dUMP) to 2'-deoxythymidine-5'-monophosphate (dTMP) while utilizing 5,10-methylenetetrahydrofolate (mTHF) as the methyl donor and reductant in the reaction, yielding dihydrofolate (DHF) as a by-product. This enzymatic reaction provides an intracellular de novo source of dTMP, an essential precursor for DNA biosynthesis. This chain is Thymidylate synthase, found in Streptococcus gordonii (strain Challis / ATCC 35105 / BCRC 15272 / CH1 / DL1 / V288).